The chain runs to 299 residues: HTH-type transcriptional regulator ArgP (299 aa).

An HTH lysR-type domain is found at 4–60 (PDYRTLQALDAVIRERGFERAAQKLCITQSAVSQRIKQLENMFGQPLLVRTVPPRPT). The segment at residues 21–40 (FERAAQKLCITQSAVSQRIK) is a DNA-binding region (H-T-H motif).

This sequence belongs to the LysR transcriptional regulatory family. As to quaternary structure, homodimer.

Functionally, controls the transcription of genes involved in arginine and lysine metabolism. In Erwinia tasmaniensis (strain DSM 17950 / CFBP 7177 / CIP 109463 / NCPPB 4357 / Et1/99), this protein is HTH-type transcriptional regulator ArgP.